We begin with the raw amino-acid sequence, 344 residues long: L-rhamnose-proton symporter (344 aa).

Transmembrane regions (helical) follow at residues 4 to 24 (AIIL…CFYA), 38 to 58 (WSIG…YLLL), 68 to 88 (FSIA…IGNI), 101 to 121 (MGIG…TPIL), 137 to 157 (TLLG…AGLL), 175 to 195 (LILA…MDAA), 207 to 227 (INSL…GAII), 259 to 279 (ILFS…YAWG), 290 to 310 (MSWM…GLLL), and 321 to 341 (VAVL…VGLG).

Belongs to the L-rhamnose transporter (TC 2.A.7.6) family.

It localises to the cell inner membrane. The enzyme catalyses L-rhamnopyranose(in) + H(+)(in) = L-rhamnopyranose(out) + H(+)(out). Uptake of L-rhamnose across the cytoplasmic membrane with the concomitant transport of protons into the cell (symport system). This chain is L-rhamnose-proton symporter, found in Yersinia pseudotuberculosis serotype O:1b (strain IP 31758).